We begin with the raw amino-acid sequence, 158 residues long: 6,7-dimethyl-8-ribityllumazine synthase (158 aa).

5-amino-6-(D-ribitylamino)uracil contacts are provided by residues phenylalanine 22, 57–59 (AYE), and 84–86 (TVI). Residue 89 to 90 (GT) participates in (2S)-2-hydroxy-3-oxobutyl phosphate binding. Histidine 92 (proton donor) is an active-site residue. Phenylalanine 117 lines the 5-amino-6-(D-ribitylamino)uracil pocket. Arginine 131 serves as a coordination point for (2S)-2-hydroxy-3-oxobutyl phosphate.

The protein belongs to the DMRL synthase family. In terms of assembly, forms an icosahedral capsid composed of 60 subunits, arranged as a dodecamer of pentamers.

It carries out the reaction (2S)-2-hydroxy-3-oxobutyl phosphate + 5-amino-6-(D-ribitylamino)uracil = 6,7-dimethyl-8-(1-D-ribityl)lumazine + phosphate + 2 H2O + H(+). It functions in the pathway cofactor biosynthesis; riboflavin biosynthesis; riboflavin from 2-hydroxy-3-oxobutyl phosphate and 5-amino-6-(D-ribitylamino)uracil: step 1/2. Functionally, catalyzes the formation of 6,7-dimethyl-8-ribityllumazine by condensation of 5-amino-6-(D-ribitylamino)uracil with 3,4-dihydroxy-2-butanone 4-phosphate. This is the penultimate step in the biosynthesis of riboflavin. The protein is 6,7-dimethyl-8-ribityllumazine synthase of Pectobacterium atrosepticum (strain SCRI 1043 / ATCC BAA-672) (Erwinia carotovora subsp. atroseptica).